The following is a 309-amino-acid chain: Olfactory receptor 14A16 (309 aa).

At 1-23 (MANLTIVTEFILMGFSTNKNMCI) the chain is on the extracellular side. A glycan (N-linked (GlcNAc...) asparagine) is linked at Asn3. A helical transmembrane segment spans residues 24-44 (LHSILFLLIYLCALMGNVLII). Residues 45–52 (MITTLDHH) are Cytoplasmic-facing. The chain crosses the membrane as a helical span at residues 53–73 (LHTPVYFFLKNLSFLDLCLIS). Over 74 to 97 (VTAPKSIANSLIHNNSISFLGCVS) the chain is Extracellular. N-linked (GlcNAc...) asparagine glycosylation is present at Asn87. Cys95 and Cys187 are disulfide-bonded. The chain crosses the membrane as a helical span at residues 98–118 (QVFLLLSSASAELLLLTVMSF). The Cytoplasmic segment spans residues 119–131 (DRYTAICHPLHYD). The helical transmembrane segment at 132–152 (VIMDRSTCVQRATVSWLYGGL) threads the bilayer. Topologically, residues 153-194 (IAVMHTAGTFSLSYCGSNMVHQFFCDIPQLLAISCSENLIRE) are extracellular. A helical transmembrane segment spans residues 195–215 (IALILINVVLDFCCFIVIIIT). Topologically, residues 216-235 (YVHVFSTVKKIPSTEGQSKA) are cytoplasmic. A helical membrane pass occupies residues 236–255 (YSICLPHLLVVLFLSTGFIA). Residues 256–268 (YLKPASESPSILD) are Extracellular-facing. A helical transmembrane segment spans residues 269–289 (AVISVFYTMLPPTFNPIIYSL). Over 290–309 (RNKAIKVALGMLIKGKLTKK) the chain is Cytoplasmic.

Belongs to the G-protein coupled receptor 1 family.

It is found in the cell membrane. In terms of biological role, odorant receptor. The protein is Olfactory receptor 14A16 (OR14A16) of Homo sapiens (Human).